The primary structure comprises 31 residues: MPTITSYFGFLLAASTITPALLIGLNKIRLI.

A helical transmembrane segment spans residues 4-26; that stretch reads ITSYFGFLLAASTITPALLIGLN.

Belongs to the PetL family. In terms of assembly, the 4 large subunits of the cytochrome b6-f complex are cytochrome b6, subunit IV (17 kDa polypeptide, PetD), cytochrome f and the Rieske protein, while the 4 small subunits are PetG, PetL, PetM and PetN. The complex functions as a dimer.

The protein resides in the plastid. It localises to the chloroplast thylakoid membrane. Functionally, component of the cytochrome b6-f complex, which mediates electron transfer between photosystem II (PSII) and photosystem I (PSI), cyclic electron flow around PSI, and state transitions. PetL is important for photoautotrophic growth as well as for electron transfer efficiency and stability of the cytochrome b6-f complex. This chain is Cytochrome b6-f complex subunit 6, found in Calycanthus floridus var. glaucus (Eastern sweetshrub).